The sequence spans 432 residues: Ornithine decarboxylase, chloroplastic (432 aa).

K95 is subject to N6-(pyridoxal phosphate)lysine. Pyridoxal 5'-phosphate contacts are provided by residues S227, G265, and E298 to R301. Y341–D342 lines the substrate pocket. Residue C377 is the Proton donor; shared with dimeric partner of the active site. Substrate is bound at residue D378. Y406 is a pyridoxal 5'-phosphate binding site.

This sequence belongs to the Orn/Lys/Arg decarboxylase class-II family. As to quaternary structure, homodimer. Only the dimer is catalytically active, as the active sites are constructed of residues from both monomers. The cofactor is pyridoxal 5'-phosphate.

Its subcellular location is the plastid. The protein resides in the chloroplast. It catalyses the reaction L-lysine + H(+) = cadaverine + CO2. It carries out the reaction L-ornithine + H(+) = putrescine + CO2. It functions in the pathway alkaloid biosynthesis; nicotine biosynthesis. Its pathway is amine and polyamine biosynthesis; putrescine biosynthesis via L-ornithine pathway; putrescine from L-ornithine: step 1/1. With respect to regulation, repressed by alpha-difluoromethylornithine (DFMO), 5,5'-dithiobis-(2-nitrobenzoic acid) (DTNB) and salicylaldehyde. Its function is as follows. Involved in the biosynthesis of pyridine alkaloid natural products, leading mainly to the production of anabasine, anatabine, nicotine and nornicotine, effective deterrents against herbivores with antiparasitic and pesticide properties (neurotoxins); nornicotine serves as the precursor in the synthesis of the carcinogen compound N'-nitrosonornicotine (NNN). Catalyzes the first and rate-limiting step of polyamine biosynthesis that converts ornithine into putrescine, which is the precursor for the polyamines, spermidine and spermine. Can also use, with a lower efficiency, L-lysine as substrate to produce cadaverine. Polyamines are essential for cell proliferation and are implicated in cellular processes, ranging from DNA replication to apoptosis. This is Ornithine decarboxylase, chloroplastic from Nicotiana glutinosa (Tobacco).